Here is an 898-residue protein sequence, read N- to C-terminus: MEWSSESAAVRRHRGTAERREGEAAASHRQREASAQEDAKGVGRMWGKTENGGGSRVAKTALSEARTALALALYLLALRALVQLSLQRLVLSRTSGLQGEFDARQARDYLEHITAIGPRTTGSTENEILTVQYLLEQIKLIEAQSNSLHSISVDIQRPTGSFSIDFLGGFTSYYDNITNVVVKLEPRDGAESAILANCHFDSVANSPGASDDAVSCAVMLEVLRVMSASPEPMQHAVVFLFNGAEENVLQASHGFITQHPWASLIRAFINLEAAGVGGKELVFQTGPENPWLVQAYVSAAKHPFASVVAQEVFQSGIIPSDTDFRIYRDFGNIPGIDLAFIENGYIYHTKYDTADRILIDSIQRAGDNILAVLKHLATSDTLASSSEYRHGSMVFFDVLGLLVIAYPSRVGSIINYMVVMAVVLYLGKKLLRPKHRNANYMRDFLCGLGITFISWFTSLVTVLIIAVFISLIGQSLSWYNYFYIAVCLYGTATVAKIIFIHTLAKRFYYMNASDLYLGELFFDTSLFVHCAFLVALTYQGFCSAFMSAVWVVFPLLTKLCVYKDFKKHGAQGRFVALYLLGMFIPYLYGLYLIWAVFEMFTPILGRSGSEIPPDVVLASILAVCVMILSSYFITFIYLVNSTKKTILTLILVCAVTFLLVCSGAFFPYSSNPESPKPKRVFLQHVSRTFHNLEGSVVKRDSGIWINGFDYTGMSHVTPHIPEINDTIRAHCEEDAPLCGFPWYLPVHFLIRKNWYLPAPEVSPRNPAHFRLVSKEKMPWDSIKLTFEATGPSHMSFYVRTHKGSTLSQWSLGNGIPVTSRGGDYFVFYSHGLQASAWRFWIEVQVSEEQAEGMVTVAIAAHYLSGENKRSSQLDALKKKFPDWSFPSAWVSTYSLFVF.

Met1 bears the N-acetylmethionine mark. A disordered region spans residues 1 to 55 (MEWSSESAAVRRHRGTAERREGEAAASHRQREASAQEDAKGVGRMWGKTENGGGS). The Cytoplasmic portion of the chain corresponds to 1 to 66 (MEWSSESAAV…VAKTALSEAR (66 aa)). Residues 29–41 (RQREASAQEDAKG) are compositionally biased toward basic and acidic residues. The helical transmembrane segment at 67 to 87 (TALALALYLLALRALVQLSLQ) threads the bilayer. Residues 88–393 (RLVLSRTSGL…SSSEYRHGSM (306 aa)) lie on the Lumenal side of the membrane. A glycan (N-linked (GlcNAc...) asparagine) is linked at Asn176. A disulfide bridge connects residues Cys198 and Cys216. Residues His199 and Asp211 each contribute to the Zn(2+) site. Catalysis depends on Glu245, which acts as the Proton acceptor. Zn(2+)-binding residues include Glu246, Glu272, and His348. A helical membrane pass occupies residues 394-414 (VFFDVLGLLVIAYPSRVGSII). The Cytoplasmic segment spans residues 415–451 (NYMVVMAVVLYLGKKLLRPKHRNANYMRDFLCGLGIT). The chain crosses the membrane as a helical span at residues 452–472 (FISWFTSLVTVLIIAVFISLI). Residues 473–480 (GQSLSWYN) lie on the Lumenal side of the membrane. The helical transmembrane segment at 481–501 (YFYIAVCLYGTATVAKIIFIH) threads the bilayer. At 502–515 (TLAKRFYYMNASDL) the chain is on the cytoplasmic side. The chain crosses the membrane as a helical span at residues 516–538 (YLGELFFDTSLFVHCAFLVALTY). Over 539-542 (QGFC) the chain is Lumenal. The helical transmembrane segment at 543-562 (SAFMSAVWVVFPLLTKLCVY) threads the bilayer. Topologically, residues 563 to 573 (KDFKKHGAQGR) are cytoplasmic. A helical membrane pass occupies residues 574–594 (FVALYLLGMFIPYLYGLYLIW). At 595 to 615 (AVFEMFTPILGRSGSEIPPDV) the chain is on the lumenal side. A helical membrane pass occupies residues 616 to 636 (VLASILAVCVMILSSYFITFI). At 637–645 (YLVNSTKKT) the chain is on the cytoplasmic side. Residues 646-666 (ILTLILVCAVTFLLVCSGAFF) traverse the membrane as a helical segment. Over 667 to 898 (PYSSNPESPK…WVSTYSLFVF (232 aa)) the chain is Lumenal. Residue Asn724 is glycosylated (N-linked (GlcNAc...) asparagine).

The protein belongs to the peptidase M28 family. The cofactor is Zn(2+).

It is found in the endoplasmic reticulum membrane. In terms of biological role, within the ovary, required for the organization of somatic cells and oocytes into discrete follicular structures. The protein is Endoplasmic reticulum metallopeptidase 1 of Mus musculus (Mouse).